We begin with the raw amino-acid sequence, 614 residues long: NEDD8 ultimate buster 1 (614 aa).

Coiled coils occupy residues 36–71 and 151–206; these read LAVK…IERG and NVKA…MVVD. 3 UBA domains span residues 373-413, 423-469, and 488-528; these read YIDP…ISNR, EEKE…LLSN, and SPSQ…LAHH. Residues 413–430 carry the Nuclear localization signal motif; that stretch reads RREELAQIRKEEKEKRRR. An NEDD8-binding 1 region spans residues 426-473; sequence EKRRRRLENVNTLRGMGYSTQAAKQALHQARGNLDDALKVLLSNPHMW. Positions 531-590 are disordered; that stretch reads SLPPDLQFSGEDSSPTPSTSPSDSAGTSSASTDEDMETEAVNEILEDIPEHEEDYLDSTL. Low complexity predominate over residues 539-561; the sequence is SGEDSSPTPSTSPSDSAGTSSAS. Positions 549–597 are NEDD8-binding 2; that stretch reads TSPSDSAGTSSASTDEDMETEAVNEILEDIPEHEEDYLDSTLEDEEVII. A compositionally biased stretch (acidic residues) spans 562–590; sequence TDEDMETEAVNEILEDIPEHEEDYLDSTL.

As to quaternary structure, directly interacts with NEDD8 and PSMD4/S5a, a member of the regulatory subunit of the 26S proteasome. Interacts with AIPL1. The interaction with UBD via UBA domains facilitates the linking of UBD-conjugated target protein to the proteasome complex and accelerates UBD degradation and that of its conjugates.

It localises to the nucleus. In terms of biological role, specific down-regulator of the NEDD8 conjugation system. Recruits NEDD8, UBD, and their conjugates to the proteasome for degradation. This chain is NEDD8 ultimate buster 1 (Nub1), found in Mus musculus (Mouse).